Reading from the N-terminus, the 251-residue chain is Low molecular mass lipoprotein PBMHPC-21 (251 aa).

Positions 1-16 (MKFVVVFASCVLAVSA) are cleaved as a signal peptide.

Belongs to the 30 kDa lipoprotein family.

The protein localises to the secreted. In Bombyx mori (Silk moth), this protein is Low molecular mass lipoprotein PBMHPC-21.